Reading from the N-terminus, the 697-residue chain is Transmembrane protein 168 (697 aa).

Transmembrane regions (helical) follow at residues 36–56 (LGYL…YVRW), 63–83 (LILV…ILYY), and 89–109 (AASL…LCFL). N-linked (GlcNAc...) asparagine glycosylation is present at Asn-111. 7 consecutive transmembrane segments (helical) span residues 172–192 (MLVE…MLII), 199–219 (FLAI…SLET), 223–243 (PIAF…DIYF), 265–285 (LSVV…AFKL), 293–313 (FVIP…IIFL), 352–372 (FCLI…ILGA), and 380–400 (GIFL…HGLF). 2 N-linked (GlcNAc...) asparagine glycosylation sites follow: Asn-533 and Asn-598. Residues 646–666 (ITYPLVHLANWLCGLNLFWIC) traverse the membrane as a helical segment.

Belongs to the TMEM168 family.

It localises to the nucleus membrane. Its function is as follows. Plays a key role in maintaining the cardiac electrical stability by modulating cell surface expression of SCN5A. May play a role in the modulation of anxiety behavior by regulating GABAergic neuronal system in the nucleus accumbens. The sequence is that of Transmembrane protein 168 from Homo sapiens (Human).